Consider the following 224-residue polypeptide: Ribonuclease T (224 aa).

Positions 20-195 constitute an Exonuclease domain; it reads VVIDVETAGF…YDTQKTAELF (176 aa). Mg(2+) is bound by residues Asp-23, Glu-25, His-182, and Asp-187. Catalysis depends on His-182, which acts as the Proton donor/acceptor.

This sequence belongs to the RNase T family. In terms of assembly, homodimer. It depends on Mg(2+) as a cofactor.

Functionally, trims short 3' overhangs of a variety of RNA species, leaving a one or two nucleotide 3' overhang. Responsible for the end-turnover of tRNA: specifically removes the terminal AMP residue from uncharged tRNA (tRNA-C-C-A). Also appears to be involved in tRNA biosynthesis. The polypeptide is Ribonuclease T (Vibrio cholerae serotype O1 (strain ATCC 39315 / El Tor Inaba N16961)).